A 216-amino-acid chain; its full sequence is Large ribosomal subunit protein uL1 (216 aa).

The protein belongs to the universal ribosomal protein uL1 family. In terms of assembly, component of the large ribosomal subunit.

It localises to the cytoplasm. In terms of biological role, component of the large ribosomal subunit. The ribosome is a large ribonucleoprotein complex responsible for the synthesis of proteins in the cell. This chain is Large ribosomal subunit protein uL1 (rpl10a), found in Danio rerio (Zebrafish).